The primary structure comprises 272 residues: 2-amino-3,7-dideoxy-D-threo-hept-6-ulosonate synthase (272 aa).

Asp33 serves as the catalytic Proton acceptor. Residues 33 to 37 and 153 to 155 contribute to the 1-deoxy-D-threo-hexo-2,5-diulose 6-phosphate site; these read DHGVS and YPR. Tyr153 acts as the Proton donor in catalysis. Lys184 (schiff-base intermediate with substrate) is an active-site residue. 1-deoxy-D-threo-hexo-2,5-diulose 6-phosphate is bound by residues 209–210 and 237–238; these read GG and GR.

Belongs to the DeoC/FbaB aldolase family. ADHS subfamily. As to quaternary structure, homodecamer.

The enzyme catalyses 1-deoxy-D-threo-hexo-2,5-diulose 6-phosphate + L-aspartate 4-semialdehyde = 2,3-dioxopropyl phosphate + 2-amino-2,3,7-trideoxy-D-lyxo-hept-6-ulosonate. In terms of biological role, catalyzes a transaldol reaction between 6-deoxy-5-ketofructose 1-phosphate (DKFP) and L-aspartate semialdehyde (ASA) with an elimination of hydroxypyruvaldehyde phosphate to yield 2-amino-3,7-dideoxy-D-threo-hept-6-ulosonate (ADH). Plays a key role in an alternative pathway of the biosynthesis of 3-dehydroquinate (DHQ), which is involved in the canonical pathway for the biosynthesis of aromatic amino acids. The polypeptide is 2-amino-3,7-dideoxy-D-threo-hept-6-ulosonate synthase (Methanococcus vannielii (strain ATCC 35089 / DSM 1224 / JCM 13029 / OCM 148 / SB)).